We begin with the raw amino-acid sequence, 370 residues long: Pulmonary surfactant-associated protein B (370 aa).

The N-terminal stretch at 1-24 (MAKSHLPPWLLLLLLPTLCGPGTA) is a signal peptide. Positions 25 to 184 (VWATSPLACA…PHTQDLSAQR (160 aa)) are excised as a propeptide. The Saposin A-type domain occupies 26–66 (WATSPLACAQGPEFWCQSLEQALQCKALGHCLQEVWGHVGA). Saposin B-type domains follow at residues 66–148 (ADDL…QPGS), 188–265 (PLPL…SSVD), and 284–359 (QDPE…VATL). Intrachain disulfides connect Cys-70–Cys-144, Cys-73–Cys-138, Cys-101–Cys-113, Cys-192–Cys-261, Cys-195–Cys-255, Cys-219–Cys-230, Cys-288–Cys-355, Cys-291–Cys-349, and Cys-314–Cys-324. The propeptide occupies 264–370 (VDSIGQVPPT…PLQCIQSPHF (107 aa)). Residue Asn-300 is glycosylated (N-linked (GlcNAc...) asparagine).

As to quaternary structure, homodimer; disulfide-linked.

It localises to the secreted. Its subcellular location is the extracellular space. The protein localises to the surface film. In terms of biological role, pulmonary surfactant-associated proteins promote alveolar stability by lowering the surface tension at the air-liquid interface in the peripheral air spaces. SP-B increases the collapse pressure of palmitic acid to nearly 70 millinewtons per meter. This chain is Pulmonary surfactant-associated protein B (SFTPB), found in Oryctolagus cuniculus (Rabbit).